A 157-amino-acid polypeptide reads, in one-letter code: Iron-sulfur cluster repair protein DnrN (157 aa).

The protein belongs to the RIC family.

The protein localises to the cytoplasm. Functionally, di-iron-containing protein involved in the repair of iron-sulfur clusters damaged by oxidative and nitrosative stress conditions. Required to repair damage caused by nitric oxide to FNR and NsrR transcription factors. The chain is Iron-sulfur cluster repair protein DnrN (dnrN) from Neisseria gonorrhoeae.